The following is a 92-amino-acid chain: RQC P-site tRNA stabilizing factor (92 aa).

Residues 5-65 (MRLDKYLKVS…GPKIVTAKIE (61 aa)) form the S4 RNA-binding domain.

The protein belongs to the RqcP family. Associates with stalled 50S ribosomal subunits. Binds to RqcH, 23S rRNA and the P-site tRNA. Does not require RqcH for association with 50S subunits.

Its function is as follows. Key component of the ribosome quality control system (RQC), a ribosome-associated complex that mediates the extraction of incompletely synthesized nascent chains from stalled ribosomes and their subsequent degradation. RqcH recruits Ala-charged tRNA, and with RqcP directs the elongation of stalled nascent chains on 50S ribosomal subunits, leading to non-templated C-terminal alanine extensions (Ala tail). The Ala tail promotes nascent chain degradation. RqcP is associated with the translocation-like movement of the peptidyl-tRNA from the A-site into the P-site. This is RQC P-site tRNA stabilizing factor from Listeria innocua serovar 6a (strain ATCC BAA-680 / CLIP 11262).